A 327-amino-acid chain; its full sequence is Protoheme IX farnesyltransferase (327 aa).

A run of 7 helical transmembrane segments spans residues 55–75 (LVCT…LNCL), 101–121 (AAFV…VSGV), 124–144 (LAAG…TALL), 152–172 (IVVG…AATG), 180–200 (WLFA…ALLL), 237–257 (FLGI…ILPF), and 278–298 (AKGL…LLVM).

This sequence belongs to the UbiA prenyltransferase family. Protoheme IX farnesyltransferase subfamily.

The protein resides in the cell inner membrane. It catalyses the reaction heme b + (2E,6E)-farnesyl diphosphate + H2O = Fe(II)-heme o + diphosphate. Its pathway is porphyrin-containing compound metabolism; heme O biosynthesis; heme O from protoheme: step 1/1. In terms of biological role, converts heme B (protoheme IX) to heme O by substitution of the vinyl group on carbon 2 of heme B porphyrin ring with a hydroxyethyl farnesyl side group. In Synechococcus sp. (strain CC9311), this protein is Protoheme IX farnesyltransferase.